Consider the following 122-residue polypeptide: Large ribosomal subunit protein uL14 (122 aa).

Belongs to the universal ribosomal protein uL14 family. In terms of assembly, part of the 50S ribosomal subunit. Forms a cluster with proteins L3 and L19. In the 70S ribosome, L14 and L19 interact and together make contacts with the 16S rRNA in bridges B5 and B8.

Functionally, binds to 23S rRNA. Forms part of two intersubunit bridges in the 70S ribosome. The protein is Large ribosomal subunit protein uL14 of Xanthomonas axonopodis pv. citri (strain 306).